The primary structure comprises 259 residues: Adenylosuccinate synthetase (259 aa).

Residues 3-9 (GDEGKGK) and 31-33 (GHT) contribute to the GTP site. Asp4 serves as the catalytic Proton acceptor. Asp4 and Gly31 together coordinate Mg(2+). 4–7 (DEGK) contacts IMP. Catalysis depends on His32, which acts as the Proton donor. The IMP site is built by Thr120, Arg134, Gln215, and Thr230.

This sequence belongs to the adenylosuccinate synthetase family. As to quaternary structure, homodimer. Mg(2+) is required as a cofactor.

It localises to the cytoplasm. The catalysed reaction is IMP + L-aspartate + GTP = N(6)-(1,2-dicarboxyethyl)-AMP + GDP + phosphate + 2 H(+). Its pathway is purine metabolism; AMP biosynthesis via de novo pathway; AMP from IMP: step 1/2. Functionally, plays an important role in the de novo pathway of purine nucleotide biosynthesis. Catalyzes the first committed step in the biosynthesis of AMP from IMP. In Aggregatibacter actinomycetemcomitans (Actinobacillus actinomycetemcomitans), this protein is Adenylosuccinate synthetase.